Reading from the N-terminus, the 179-residue chain is Cell division protein SepF (179 aa).

The segment at 18–57 (EDSTVPYEKGNEPVFTPVNSSQEPDLPMNQPSQSAGAKDS) is disordered. Residues 34–57 (PVNSSQEPDLPMNQPSQSAGAKDS) show a composition bias toward polar residues.

This sequence belongs to the SepF family. As to quaternary structure, homodimer. Interacts with FtsZ.

The protein resides in the cytoplasm. In terms of biological role, cell division protein that is part of the divisome complex and is recruited early to the Z-ring. Probably stimulates Z-ring formation, perhaps through the cross-linking of FtsZ protofilaments. Its function overlaps with FtsA. This Streptococcus pneumoniae (strain Hungary19A-6) protein is Cell division protein SepF.